Here is a 195-residue protein sequence, read N- to C-terminus: Imidazoleglycerol-phosphate dehydratase (195 aa).

It belongs to the imidazoleglycerol-phosphate dehydratase family.

The protein localises to the cytoplasm. The catalysed reaction is D-erythro-1-(imidazol-4-yl)glycerol 3-phosphate = 3-(imidazol-4-yl)-2-oxopropyl phosphate + H2O. It functions in the pathway amino-acid biosynthesis; L-histidine biosynthesis; L-histidine from 5-phospho-alpha-D-ribose 1-diphosphate: step 6/9. The protein is Imidazoleglycerol-phosphate dehydratase of Burkholderia cenocepacia (strain ATCC BAA-245 / DSM 16553 / LMG 16656 / NCTC 13227 / J2315 / CF5610) (Burkholderia cepacia (strain J2315)).